Reading from the N-terminus, the 426-residue chain is Glutamate-1-semialdehyde 2,1-aminomutase (426 aa).

Residue Lys-265 is modified to N6-(pyridoxal phosphate)lysine.

It belongs to the class-III pyridoxal-phosphate-dependent aminotransferase family. HemL subfamily. As to quaternary structure, homodimer. Pyridoxal 5'-phosphate serves as cofactor.

Its subcellular location is the cytoplasm. The enzyme catalyses (S)-4-amino-5-oxopentanoate = 5-aminolevulinate. The protein operates within porphyrin-containing compound metabolism; protoporphyrin-IX biosynthesis; 5-aminolevulinate from L-glutamyl-tRNA(Glu): step 2/2. The sequence is that of Glutamate-1-semialdehyde 2,1-aminomutase from Escherichia fergusonii (strain ATCC 35469 / DSM 13698 / CCUG 18766 / IAM 14443 / JCM 21226 / LMG 7866 / NBRC 102419 / NCTC 12128 / CDC 0568-73).